A 335-amino-acid polypeptide reads, in one-letter code: Hsp90 co-chaperone Cdc37-like 1 (335 aa).

A compositionally biased stretch (pro residues) spans methionine 1–tryptophan 11. Residues methionine 1–glycine 42 form a disordered region. The self-association stretch occupies residues glutamate 2–methionine 170. Positions aspartate 27–aspartate 40 are enriched in low complexity. Phosphoserine is present on residues serine 32 and serine 88. A coiled-coil region spans residues histidine 84–arginine 120. The segment at lysine 147–glutamine 276 is self-association and interaction with Hsp90. The segment at lysine 266 to valine 335 is interaction with Hsp70. Residues serine 277–valine 335 are required for interaction with STIP1.

It belongs to the CDC37 family. In terms of assembly, self-associates. Forms complexes with Hsp70 and Hsp90. Interacts with CDC37, FKBP4, PPID and STIP1.

It localises to the cytoplasm. Functionally, co-chaperone that binds to numerous proteins and promotes their interaction with Hsp70 and Hsp90. This chain is Hsp90 co-chaperone Cdc37-like 1 (Cdc37l1), found in Rattus norvegicus (Rat).